Reading from the N-terminus, the 217-residue chain is MKFFLDTANVEEIKKYAELGLVDGVTTNPTLVAKEGRDFYEVVKEICEIVEGPVSAEVISTDAEGMVKEARELAKLADNIVIKIPMTKDGMKAVKILSAEGIKTNVTLVFSPLQALVAAKAGATYVSPFVGRLDDIGHVGMKLIEDVVKIYKNYDIKTEVIVASVRHPWHVLEAAKIGADIATMPPAVMDKLFNHPLTDIGLERFLKDWDEYLKSRK.

Lysine 83 (schiff-base intermediate with substrate) is an active-site residue.

This sequence belongs to the transaldolase family. Type 3B subfamily.

Its subcellular location is the cytoplasm. It catalyses the reaction D-sedoheptulose 7-phosphate + D-glyceraldehyde 3-phosphate = D-erythrose 4-phosphate + beta-D-fructose 6-phosphate. The protein operates within carbohydrate degradation; pentose phosphate pathway; D-glyceraldehyde 3-phosphate and beta-D-fructose 6-phosphate from D-ribose 5-phosphate and D-xylulose 5-phosphate (non-oxidative stage): step 2/3. Functionally, transaldolase is important for the balance of metabolites in the pentose-phosphate pathway. This Methanocaldococcus jannaschii (strain ATCC 43067 / DSM 2661 / JAL-1 / JCM 10045 / NBRC 100440) (Methanococcus jannaschii) protein is Probable transaldolase (tal).